A 367-amino-acid polypeptide reads, in one-letter code: Outer membrane porin C (367 aa).

The N-terminal stretch at 1 to 21 (MKVKVLSLLVPALLVAGAANA) is a signal peptide.

It belongs to the Gram-negative porin family. As to quaternary structure, homotrimer.

Its subcellular location is the cell outer membrane. Forms pores that allow passive diffusion of small molecules across the outer membrane. The protein is Outer membrane porin C (ompC) of Escherichia coli O157:H7.